The following is a 525-amino-acid chain: Bifunctional purine biosynthesis protein PurH (525 aa).

An MGS-like domain is found at 1 to 148 (MPSNNLIKNA…KNYKNVIVIV (148 aa)).

Belongs to the PurH family.

The catalysed reaction is (6R)-10-formyltetrahydrofolate + 5-amino-1-(5-phospho-beta-D-ribosyl)imidazole-4-carboxamide = 5-formamido-1-(5-phospho-D-ribosyl)imidazole-4-carboxamide + (6S)-5,6,7,8-tetrahydrofolate. It carries out the reaction IMP + H2O = 5-formamido-1-(5-phospho-D-ribosyl)imidazole-4-carboxamide. It participates in purine metabolism; IMP biosynthesis via de novo pathway; 5-formamido-1-(5-phospho-D-ribosyl)imidazole-4-carboxamide from 5-amino-1-(5-phospho-D-ribosyl)imidazole-4-carboxamide (10-formyl THF route): step 1/1. It functions in the pathway purine metabolism; IMP biosynthesis via de novo pathway; IMP from 5-formamido-1-(5-phospho-D-ribosyl)imidazole-4-carboxamide: step 1/1. The sequence is that of Bifunctional purine biosynthesis protein PurH from Buchnera aphidicola subsp. Acyrthosiphon pisum (strain APS) (Acyrthosiphon pisum symbiotic bacterium).